The following is a 326-amino-acid chain: Phenylalanine--tRNA ligase alpha subunit (326 aa).

Residue Glu-251 participates in Mg(2+) binding.

This sequence belongs to the class-II aminoacyl-tRNA synthetase family. Phe-tRNA synthetase alpha subunit type 1 subfamily. As to quaternary structure, tetramer of two alpha and two beta subunits. Mg(2+) is required as a cofactor.

It localises to the cytoplasm. It carries out the reaction tRNA(Phe) + L-phenylalanine + ATP = L-phenylalanyl-tRNA(Phe) + AMP + diphosphate + H(+). The sequence is that of Phenylalanine--tRNA ligase alpha subunit from Idiomarina loihiensis (strain ATCC BAA-735 / DSM 15497 / L2-TR).